The chain runs to 276 residues: 2-dehydro-3-deoxyphosphooctonate aldolase (276 aa).

This sequence belongs to the KdsA family.

It localises to the cytoplasm. It catalyses the reaction D-arabinose 5-phosphate + phosphoenolpyruvate + H2O = 3-deoxy-alpha-D-manno-2-octulosonate-8-phosphate + phosphate. Its pathway is carbohydrate biosynthesis; 3-deoxy-D-manno-octulosonate biosynthesis; 3-deoxy-D-manno-octulosonate from D-ribulose 5-phosphate: step 2/3. It participates in bacterial outer membrane biogenesis; lipopolysaccharide biosynthesis. This chain is 2-dehydro-3-deoxyphosphooctonate aldolase, found in Chelativorans sp. (strain BNC1).